The primary structure comprises 167 residues: Protein-export protein SecB (167 aa).

The protein belongs to the SecB family. Homotetramer, a dimer of dimers. One homotetramer interacts with 1 SecA dimer.

The protein localises to the cytoplasm. One of the proteins required for the normal export of preproteins out of the cell cytoplasm. It is a molecular chaperone that binds to a subset of precursor proteins, maintaining them in a translocation-competent state. It also specifically binds to its receptor SecA. The polypeptide is Protein-export protein SecB (Wolbachia sp. subsp. Brugia malayi (strain TRS)).